The sequence spans 189 residues: Elongation factor P (189 aa).

Belongs to the elongation factor P family.

It localises to the cytoplasm. It functions in the pathway protein biosynthesis; polypeptide chain elongation. Functionally, involved in peptide bond synthesis. Stimulates efficient translation and peptide-bond synthesis on native or reconstituted 70S ribosomes in vitro. Probably functions indirectly by altering the affinity of the ribosome for aminoacyl-tRNA, thus increasing their reactivity as acceptors for peptidyl transferase. In Pseudomonas putida (strain ATCC 700007 / DSM 6899 / JCM 31910 / BCRC 17059 / LMG 24140 / F1), this protein is Elongation factor P.